The chain runs to 127 residues: MARVGAKSSGAGAKKKGVSFVIDCSKPVDDTILEIATLEKFLQERIKVRGKAGALGNSVSITRYNGKINVNANSNFSKRYLKYLTKKYLKKYNLRDWLRVIASNKDKNVYEVRYFRIDDEVASYEED.

It belongs to the eukaryotic ribosomal protein eL22 family.

In Arabidopsis thaliana (Mouse-ear cress), this protein is Large ribosomal subunit protein eL22x (RPL22A).